Reading from the N-terminus, the 308-residue chain is Glutathione synthetase (308 aa).

Residues 120–304 enclose the ATP-grasp domain; the sequence is KLGALRFNNL…LADQVIARLL (185 aa). 146 to 202 is an ATP binding site; it reads AREQEEVVLKPLGGRAGQGLVRVAGAAPGLEALLELVTDQEQLPVMVQRFLPAVIEG. Residues Glu-275 and Asn-277 each contribute to the Mg(2+) site.

It belongs to the prokaryotic GSH synthase family. Mg(2+) serves as cofactor. Requires Mn(2+) as cofactor.

It catalyses the reaction gamma-L-glutamyl-L-cysteine + glycine + ATP = glutathione + ADP + phosphate + H(+). The protein operates within sulfur metabolism; glutathione biosynthesis; glutathione from L-cysteine and L-glutamate: step 2/2. This Prochlorococcus marinus (strain MIT 9313) protein is Glutathione synthetase.